The chain runs to 82 residues: Sulfur carrier protein TusA (82 aa).

Residue Cys-19 is the Cysteine persulfide intermediate of the active site.

This sequence belongs to the sulfur carrier protein TusA family.

It localises to the cytoplasm. Its function is as follows. Sulfur carrier protein which probably makes part of a sulfur-relay system. This Tolumonas auensis (strain DSM 9187 / NBRC 110442 / TA 4) protein is Sulfur carrier protein TusA.